We begin with the raw amino-acid sequence, 309 residues long: Olfactory receptor 5B2 (309 aa).

Topologically, residues Met1–Ile23 are extracellular. Asn3 is a glycosylation site (N-linked (GlcNAc...) asparagine). A helical transmembrane segment spans residues Pro24–Ile47. The Cytoplasmic segment spans residues Leu48–Thr55. The helical transmembrane segment at Pro56–Pro77 threads the bilayer. The Extracellular segment spans residues Lys78–Gln98. Cysteines 95 and 187 form a disulfide. A helical transmembrane segment spans residues Met99 to Tyr118. The Cytoplasmic portion of the chain corresponds to Asp119–Ser137. Residues Val138–Phe156 form a helical membrane-spanning segment. Residues His157–Ser193 lie on the Extracellular side of the membrane. A helical membrane pass occupies residues Glu194–Leu217. Topologically, residues Phe218–Lys234 are cytoplasmic. Residues Ala235 to Tyr257 traverse the membrane as a helical segment. The Extracellular portion of the chain corresponds to Leu258 to Lys270. A helical membrane pass occupies residues Met271–Leu290. Over Arg291–Leu309 the chain is Cytoplasmic.

This sequence belongs to the G-protein coupled receptor 1 family.

The protein localises to the cell membrane. In terms of biological role, odorant receptor. The protein is Olfactory receptor 5B2 (OR5B2) of Homo sapiens (Human).